A 199-amino-acid chain; its full sequence is Superoxide dismutase [Cu-Zn] (199 aa).

Residues 1-22 (MKLTKVALFSLGLFGFSSMALA) form the signal peptide. His92, His94, and His117 together coordinate Cu cation. The cysteines at positions 99 and 195 are disulfide-linked. Residues His117, His126, His135, and Asp138 each coordinate Zn(2+). His173 lines the Cu cation pocket.

It belongs to the Cu-Zn superoxide dismutase family. In terms of assembly, homodimer. The cofactor is Cu cation. It depends on Zn(2+) as a cofactor.

Its subcellular location is the periplasm. The catalysed reaction is 2 superoxide + 2 H(+) = H2O2 + O2. Its function is as follows. Destroys radicals which are normally produced within the cells and which are toxic to biological systems. May play a role in the interactive biology of organisms with their hosts and so contribute to their capacity to cause disease. This chain is Superoxide dismutase [Cu-Zn] (sodC), found in Haemophilus ducreyi (strain 35000HP / ATCC 700724).